Consider the following 164-residue polypeptide: Peptidyl-prolyl cis-trans isomerase CYP18-2 (164 aa).

One can recognise a PPIase cyclophilin-type domain in the interval 12–162 (VTLETSMGPF…HEVKILRTKV (151 aa)).

This sequence belongs to the cyclophilin-type PPIase family. Ubiquitous.

It localises to the cytoplasm. The enzyme catalyses [protein]-peptidylproline (omega=180) = [protein]-peptidylproline (omega=0). Functionally, PPIases accelerate the folding of proteins. It catalyzes the cis-trans isomerization of proline imidic peptide bonds in oligopeptides. This chain is Peptidyl-prolyl cis-trans isomerase CYP18-2 (CYP18-2), found in Arabidopsis thaliana (Mouse-ear cress).